The primary structure comprises 192 residues: Peptidyl-tRNA hydrolase (192 aa).

Y17 contributes to the tRNA binding site. Residue H22 is the Proton acceptor of the active site. TRNA is bound by residues Y68, N70, and N116.

It belongs to the PTH family. In terms of assembly, monomer.

It localises to the cytoplasm. The catalysed reaction is an N-acyl-L-alpha-aminoacyl-tRNA + H2O = an N-acyl-L-amino acid + a tRNA + H(+). Functionally, hydrolyzes ribosome-free peptidyl-tRNAs (with 1 or more amino acids incorporated), which drop off the ribosome during protein synthesis, or as a result of ribosome stalling. Catalyzes the release of premature peptidyl moieties from peptidyl-tRNA molecules trapped in stalled 50S ribosomal subunits, and thus maintains levels of free tRNAs and 50S ribosomes. This is Peptidyl-tRNA hydrolase from Mycolicibacterium vanbaalenii (strain DSM 7251 / JCM 13017 / BCRC 16820 / KCTC 9966 / NRRL B-24157 / PYR-1) (Mycobacterium vanbaalenii).